We begin with the raw amino-acid sequence, 503 residues long: Catalase (503 aa).

The disordered stretch occupies residues 1 to 26 (MAKDDKRLTGLFGHPVSDRENSMTAG). Active-site residues include His-56 and Asn-129. Tyr-339 is a heme binding site.

The protein belongs to the catalase family. Homodimer. The cofactor is heme.

It carries out the reaction 2 H2O2 = O2 + 2 H2O. Its function is as follows. Decomposes hydrogen peroxide into water and oxygen; serves to protect cells from the toxic effects of hydrogen peroxide. The sequence is that of Catalase (katA) from Staphylococcus haemolyticus (strain JCSC1435).